The sequence spans 579 residues: Glucose starvation modulator protein 1 (579 aa).

Positions 20–48 (CVFCHEKHLQCDLGRPCQNCSKRGIGDTC) form a DNA-binding region, zn(2)-C6 fungal-type. The span at 43-53 (GIGDTCRDKER) shows a compositional bias: basic and acidic residues. Disordered stretches follow at residues 43–75 (GIGD…STKS) and 319–342 (QMAS…GETV). Positions 54 to 64 (KPRKRGPRKVK) are enriched in basic residues. Residues 330 to 339 (NDTSPESQGG) are compositionally biased toward polar residues. The PAS domain occupies 444 to 516 (LLEYESMAKL…DIFHEYLAFG (73 aa)).

This sequence belongs to the ERT1/acuK family.

The protein resides in the nucleus. Functionally, transcription factor which regulates nonfermentable carbon utilization. The polypeptide is Glucose starvation modulator protein 1 (GSM1) (Kluyveromyces lactis (strain ATCC 8585 / CBS 2359 / DSM 70799 / NBRC 1267 / NRRL Y-1140 / WM37) (Yeast)).